The primary structure comprises 170 residues: MQNLQEKASEWSGVETNHAFAIDDTNLFQKLGLQTFINLSTNFYNRVYVDDEEWFRSIFAKSDKDKAIQNQYEFLVQRMGGPPLYSQRRGHPALIARHRPFPVTHEAAERWLLHMQQALDNISDIDHDSKIMLMNFFRHTAYFLVAGVEQKNQSLHPCKDADGRHPCKNF.

Heme b is bound at residue His98.

Belongs to the truncated hemoglobin family. Group II subfamily. In terms of assembly, homodimer when ferric.

Functionally, hemoglobin-like protein that exhibits an unusual concentration-independent binding of O(2) and CO. Required for general plant development and during nodulation. May promote shoot organogenesis from root explants. This chain is Group 2 truncated hemoglobin 3-1, found in Medicago truncatula (Barrel medic).